The primary structure comprises 430 residues: Synaptotagmin-11 (430 aa).

Topologically, residues 1–15 are vesicular; it reads MAEITNIRPSFDVSP. The helical transmembrane segment at 16–36 threads the bilayer; sequence VAAGLIGASVLVVCVSVTVFV. Topologically, residues 37-430 are cytoplasmic; the sequence is WTCCHQQAEK…VAKWHSLSEY (394 aa). Positions 132-154 are disordered; sequence RSPMTSLTPGESKPTSPSSPEED. Ser-133 carries the phosphoserine modification. The segment covering 140–150 has biased composition (low complexity); it reads PGESKPTSPSS. C2 domains follow at residues 156–278 and 290–425; these read MLGS…QLTR and SRGE…AKWH. The Ca(2+) site is built by Asp-249, Ser-252, and Asp-255.

It belongs to the synaptotagmin family. As to quaternary structure, homodimer. Can also form heterodimers. Interacts with PRKN. Interacts (via C2 2 domain) with AGO2 and SND1; the interaction with SND1 is direct. Interacts with KIF1A; the interaction increases in presence of calcium. The cofactor is Ca(2+). Post-translationally, ubiquitinated, at least by PRKN, and targeted to the proteasome complex for degradation. Ubiquitination is inhibited by ATP13A2. As to expression, highly expressed in brain and at lower levels in other tissues.

The protein resides in the cytoplasmic vesicle membrane. It localises to the perikaryon. It is found in the golgi apparatus. Its subcellular location is the trans-Golgi network membrane. The protein localises to the recycling endosome membrane. The protein resides in the lysosome membrane. It localises to the cytoplasmic vesicle. It is found in the phagosome. Its subcellular location is the cell projection. The protein localises to the axon. The protein resides in the dendrite. It localises to the postsynaptic density. It is found in the clathrin-coated vesicle membrane. Synaptotagmin family member involved in vesicular and membrane trafficking which does not bind Ca(2+). Inhibits clathrin-mediated and bulk endocytosis in neurons, functions to ensure precision in vesicle retrieval. Plays an important role in dopamine transmission by regulating endocytosis and the vesicle-recycling process. Essential component of a neuronal vesicular trafficking pathway that differs from the synaptic vesicle trafficking pathway but is crucial for development and synaptic plasticity. In macrophages and microglia, inhibits the conventional cytokine secretion, of at least IL6 and TNF, and phagocytosis. In astrocytes, regulates lysosome exocytosis, mechanism required for the repair of injured astrocyte cell membrane. Required for the ATP13A2-mediated regulation of the autophagy-lysosome pathway. The chain is Synaptotagmin-11 from Rattus norvegicus (Rat).